We begin with the raw amino-acid sequence, 108 residues long: Translation initiation factor 1A (108 aa).

One can recognise an S1-like domain in the interval 11–85; that stretch reads SVKEVPKPAE…NKCDIIYKYS (75 aa).

This sequence belongs to the eIF-1A family.

Functionally, seems to be required for maximal rate of protein biosynthesis. Enhances ribosome dissociation into subunits and stabilizes the binding of the initiator Met-tRNA(I) to 40 S ribosomal subunits. In Sulfurisphaera tokodaii (strain DSM 16993 / JCM 10545 / NBRC 100140 / 7) (Sulfolobus tokodaii), this protein is Translation initiation factor 1A (eIF1A).